The chain runs to 318 residues: Ribosomal RNA small subunit methyltransferase H (318 aa).

S-adenosyl-L-methionine contacts are provided by residues glycine 33–histidine 35, aspartate 53, phenylalanine 80, aspartate 101, and glutamine 108.

The protein belongs to the methyltransferase superfamily. RsmH family.

The protein resides in the cytoplasm. The enzyme catalyses cytidine(1402) in 16S rRNA + S-adenosyl-L-methionine = N(4)-methylcytidine(1402) in 16S rRNA + S-adenosyl-L-homocysteine + H(+). In terms of biological role, specifically methylates the N4 position of cytidine in position 1402 (C1402) of 16S rRNA. In Symbiobacterium thermophilum (strain DSM 24528 / JCM 14929 / IAM 14863 / T), this protein is Ribosomal RNA small subunit methyltransferase H.